The primary structure comprises 311 residues: Bifunctional protein FolD (311 aa).

NADP(+) is bound at residue 174–176; the sequence is GKG.

The protein belongs to the tetrahydrofolate dehydrogenase/cyclohydrolase family. In terms of assembly, homodimer.

The enzyme catalyses (6R)-5,10-methylene-5,6,7,8-tetrahydrofolate + NADP(+) = (6R)-5,10-methenyltetrahydrofolate + NADPH. The catalysed reaction is (6R)-5,10-methenyltetrahydrofolate + H2O = (6R)-10-formyltetrahydrofolate + H(+). It functions in the pathway one-carbon metabolism; tetrahydrofolate interconversion. Functionally, catalyzes the oxidation of 5,10-methylenetetrahydrofolate to 5,10-methenyltetrahydrofolate and then the hydrolysis of 5,10-methenyltetrahydrofolate to 10-formyltetrahydrofolate. In Pyrobaculum neutrophilum (strain DSM 2338 / JCM 9278 / NBRC 100436 / V24Sta) (Thermoproteus neutrophilus), this protein is Bifunctional protein FolD.